We begin with the raw amino-acid sequence, 289 residues long: ATP synthase gamma chain (289 aa).

It belongs to the ATPase gamma chain family. As to quaternary structure, F-type ATPases have 2 components, CF(1) - the catalytic core - and CF(0) - the membrane proton channel. CF(1) has five subunits: alpha(3), beta(3), gamma(1), delta(1), epsilon(1). CF(0) has three main subunits: a, b and c.

The protein resides in the cell inner membrane. Produces ATP from ADP in the presence of a proton gradient across the membrane. The gamma chain is believed to be important in regulating ATPase activity and the flow of protons through the CF(0) complex. This is ATP synthase gamma chain from Anaeromyxobacter dehalogenans (strain 2CP-C).